The following is an 857-amino-acid chain: Linoleate 9S-lipoxygenase 6 (857 aa).

In terms of domain architecture, PLAT spans 26-156; that stretch reads NALDFTDLAG…RYKSDRIFFA (131 aa). One can recognise a Lipoxygenase domain in the interval 159-857; it reads PYLPSETPEL…GKGIPNSVSI (699 aa). A disordered region spans residues 205 to 243; sequence NPDQGEQNVRTTLGGSADYPYPRRGRTGRPPTRTDPKSE. Residues 208-218 show a composition bias toward polar residues; that stretch reads QGEQNVRTTLG. Residues H518, H523, H709, N713, and I857 each contribute to the Fe cation site.

It belongs to the lipoxygenase family. Monomer. It depends on Fe cation as a cofactor. As to expression, expressed in tubers and roots. Detected in leaves, petioles and stems.

The protein localises to the cytoplasm. It catalyses the reaction (9Z,12Z)-octadecadienoate + O2 = (9S)-hydroperoxy-(10E,12Z)-octadecadienoate. It functions in the pathway lipid metabolism; oxylipin biosynthesis. Plant lipoxygenases may be involved in a number of diverse aspects of plant physiology including growth and development, pest resistance, and senescence or responses to wounding. Catalyzes the hydroperoxidation of lipids containing a cis,cis-1,4-pentadiene structure. Linoleic and linolenic acids are the preferred substrates, but is also active with arachidonic acid. The products are almost exclusively the S enantiomers. The sequence is that of Linoleate 9S-lipoxygenase 6 (LOX1.6) from Solanum tuberosum (Potato).